A 337-amino-acid chain; its full sequence is Serpentine receptor class delta-50 (337 aa).

A run of 7 helical transmembrane segments spans residues V10 to L30, I48 to Q68, V107 to F127, Q147 to N167, S202 to F222, G250 to I270, and L280 to L300.

It belongs to the nematode receptor-like protein srd family.

The protein resides in the membrane. The protein is Serpentine receptor class delta-50 of Caenorhabditis elegans.